We begin with the raw amino-acid sequence, 152 residues long: SsrA-binding protein (152 aa).

The segment at 130–152 (HDKRQDLKQRQDKREMERAMKQR) is disordered. The segment covering 132–152 (KRQDLKQRQDKREMERAMKQR) has biased composition (basic and acidic residues).

Belongs to the SmpB family.

The protein localises to the cytoplasm. Functionally, required for rescue of stalled ribosomes mediated by trans-translation. Binds to transfer-messenger RNA (tmRNA), required for stable association of tmRNA with ribosomes. tmRNA and SmpB together mimic tRNA shape, replacing the anticodon stem-loop with SmpB. tmRNA is encoded by the ssrA gene; the 2 termini fold to resemble tRNA(Ala) and it encodes a 'tag peptide', a short internal open reading frame. During trans-translation Ala-aminoacylated tmRNA acts like a tRNA, entering the A-site of stalled ribosomes, displacing the stalled mRNA. The ribosome then switches to translate the ORF on the tmRNA; the nascent peptide is terminated with the 'tag peptide' encoded by the tmRNA and targeted for degradation. The ribosome is freed to recommence translation, which seems to be the essential function of trans-translation. This is SsrA-binding protein from Thermosynechococcus vestitus (strain NIES-2133 / IAM M-273 / BP-1).